The primary structure comprises 139 residues: Protein archease (139 aa).

The Ca(2+) site is built by aspartate 12, aspartate 138, and isoleucine 139.

Belongs to the archease family.

Activates the tRNA-splicing ligase complex by facilitating the enzymatic turnover of catalytic subunit RtcB. Acts by promoting the guanylylation of RtcB, a key intermediate step in tRNA ligation. Can also alter the NTP specificity of RtcB such that ATP, dGTP or ITP is used efficiently. The chain is Protein archease from Sulfurisphaera tokodaii (strain DSM 16993 / JCM 10545 / NBRC 100140 / 7) (Sulfolobus tokodaii).